A 969-amino-acid chain; its full sequence is Putative zinc protease mug138 (969 aa).

Residue H68 participates in Zn(2+) binding. E71 functions as the Proton acceptor in the catalytic mechanism. 2 residues coordinate Zn(2+): H72 and E149.

It belongs to the peptidase M16 family.

It is found in the cytoplasm. Functionally, has a role in meiosis. This chain is Putative zinc protease mug138 (mug138), found in Schizosaccharomyces pombe (strain 972 / ATCC 24843) (Fission yeast).